The following is a 372-amino-acid chain: sn-glycerol-3-phosphate import ATP-binding protein UgpC (372 aa).

Residues 2–233 enclose the ABC transporter domain; the sequence is LDIQQLVKTY…PASTFVASFI (232 aa). 35–42 contacts ATP; it reads GPSGCGKS.

The protein belongs to the ABC transporter superfamily. sn-glycerol-3-phosphate importer (TC 3.A.1.1.3) family. As to quaternary structure, the complex is composed of two ATP-binding proteins (UgpC), two transmembrane proteins (UgpA and UgpE) and a solute-binding protein (UgpB).

It is found in the cell inner membrane. The catalysed reaction is sn-glycerol 3-phosphate(out) + ATP + H2O = sn-glycerol 3-phosphate(in) + ADP + phosphate + H(+). In terms of biological role, part of the ABC transporter complex UgpBAEC involved in sn-glycerol-3-phosphate (G3P) import. Responsible for energy coupling to the transport system. This chain is sn-glycerol-3-phosphate import ATP-binding protein UgpC, found in Vibrio vulnificus (strain YJ016).